The primary structure comprises 599 residues: DNA primase (599 aa).

A CHC2-type zinc finger spans residues 38 to 62 (CPFHQEKTPSFTVSDSKRFFYCFGC). Residues 250–332 (NYSILVEGYF…EKKISFIRLP (83 aa)) enclose the Toprim domain. Glu-256, Asp-300, and Asp-302 together coordinate Mg(2+).

It belongs to the DnaG primase family. As to quaternary structure, monomer. Interacts with DnaB. Zn(2+) is required as a cofactor. The cofactor is Mg(2+).

It carries out the reaction ssDNA + n NTP = ssDNA/pppN(pN)n-1 hybrid + (n-1) diphosphate.. RNA polymerase that catalyzes the synthesis of short RNA molecules used as primers for DNA polymerase during DNA replication. The protein is DNA primase of Rickettsia bellii (strain RML369-C).